The chain runs to 816 residues: Pentatricopeptide repeat-containing protein At5g12100, mitochondrial (816 aa).

The transit peptide at 1 to 39 (MVTRLRLVSRSSRYATVKFTDSVSACSCRRLFSASTDPE) directs the protein to the mitochondrion. Residues 34–57 (ASTDPEPESQPEQAPPTNPVTGDE) are disordered. 20 PPR repeats span residues 108-142 (HDFS…GIYP), 143-177 (SSDS…DFRP), 178-212 (SKFM…RIYP), 213-247 (SVFI…RLLP), 248-282 (SLIT…HIEP), 283-317 (SLIT…GFVP), 318-352 (DAFT…GVKM), 353-387 (NAYT…GLVP), 388-422 (NEVI…GMKP), 423-457 (DHLA…GVSP), 458-492 (SVET…GTMP), 493-527 (NVVS…GVSP), 528-562 (KVRI…GIEL), 563-597 (NLVT…GLKP), 598-632 (DVFT…GIKP), 633-662 (TLKT…MSLK), 664-698 (DLLV…SIGL), 699-733 (DKTT…EMEP), 734-768 (EADT…GFLL), and 769-803 (DVCI…MLGD).

This sequence belongs to the PPR family. P subfamily.

It localises to the mitochondrion. The protein is Pentatricopeptide repeat-containing protein At5g12100, mitochondrial of Arabidopsis thaliana (Mouse-ear cress).